We begin with the raw amino-acid sequence, 330 residues long: Inorganic pyrophosphatase 2, mitochondrial (330 aa).

The transit peptide at 1 to 27 (MRALLPLLSVGRGWRVGAAARPPRRVM) directs the protein to the mitochondrion. 3 residues coordinate Mg(2+): D159, D164, and D196. Position 211 is an N6-succinyllysine (K211). K219 carries the post-translational modification N6-acetyllysine. The residue at position 254 (K254) is an N6-succinyllysine. N6-acetyllysine is present on K256.

Belongs to the PPase family. Homodimer. Mg(2+) serves as cofactor.

The protein resides in the mitochondrion. It catalyses the reaction diphosphate + H2O = 2 phosphate + H(+). Functionally, hydrolyzes inorganic pyrophosphate. This activity is essential for correct regulation of mitochondrial membrane potential, and mitochondrial organization and function. The protein is Inorganic pyrophosphatase 2, mitochondrial (Ppa2) of Mus musculus (Mouse).